The sequence spans 337 residues: Pentalenene synthase (337 aa).

Mg(2+) is bound by residues Asp-80 and Asp-84. The short motif at 80-84 (DDLFD) is the DDXXD motif element. Cysteines 128 and 136 form a disulfide. 3 residues coordinate Mg(2+): Asn-219, Ser-223, and Glu-227.

It belongs to the terpene synthase family. In terms of assembly, monomer. Mg(2+) is required as a cofactor.

It catalyses the reaction (2E,6E)-farnesyl diphosphate = pentalenene + diphosphate. The protein operates within sesquiterpene biosynthesis; pentalenene biosynthesis; pentalenene from farnesyl diphosphate: step 1/1. It participates in antibiotic biosynthesis; pentalenolactone biosynthesis. Its function is as follows. Catalyzes the cyclization of farnesyl diphosphate (FPP) to the tricyclic sesquiterpene pentalenene, which is the hydrocarbon precursor of the pentalenolactone family of antibiotics produced by a variety of Streptomyces species. This chain is Pentalenene synthase (penA), found in Streptomyces exfoliatus (Streptomyces hydrogenans).